Consider the following 871-residue polypeptide: Metabotropic glutamate receptor 6 (871 aa).

Residues 1-23 (MGRLPVLLLWLAWWLSQAGIACG) form the signal peptide. Residues 24–579 (AGSVRLAGGL…VVRLTWSSPW (556 aa)) are Extracellular-facing. An intrachain disulfide couples C51 to C93. L-glutamate-binding positions include S148, 169-171 (AST), and Y219. 7 cysteine pairs are disulfide-bonded: C238-C530, C361-C377, C417-C424, C512-C531, C516-C534, C537-C549, and C552-C565. N-linked (GlcNAc...) asparagine glycosylation is present at N290. D301 contributes to the L-glutamate binding site. Residue K394 participates in L-glutamate binding. N-linked (GlcNAc...) asparagine glycans are attached at residues N445 and N473. N-linked (GlcNAc...) asparagine glycosylation occurs at N561. A helical transmembrane segment spans residues 580–602 (AALPLLLAVLGIMATTTIMATFM). Topologically, residues 603–616 (RHNDTPIVRASGRE) are cytoplasmic. The helical transmembrane segment at 617 to 637 (LSYVLLTGIFLIYAITFLMVA) threads the bilayer. Over 638–648 (EPCAAICAARR) the chain is Extracellular. The chain crosses the membrane as a helical span at residues 649-667 (LLLGLGTTLSYSALLTKTN). Residues 668–691 (RIYRIFEQGKRSVTPPPFISPTSQ) lie on the Cytoplasmic side of the membrane. A helical membrane pass occupies residues 692–712 (LVITFGLTSLQVVGVIAWLGA). The Extracellular segment spans residues 713–742 (QPPHSVIDYEEQRTVDPEQARGVLKCDMSD). A helical transmembrane segment spans residues 743–764 (LSLIGCLGYSLLLMVTCTVYAI). Topologically, residues 765-777 (KARGVPETFNEAK) are cytoplasmic. The chain crosses the membrane as a helical span at residues 778 to 800 (PIGFTMYTTCIIWLAFVPIFFGT). The Extracellular portion of the chain corresponds to 801–813 (AQSAEKIYIQTTT). Residues 814-839 (LTVSLSLSASVSLGMLYVPKTYVILF) traverse the membrane as a helical segment. Topologically, residues 840-871 (HPEQNVQKRKRSLKKTSTMAAPPQNENAEDAK) are cytoplasmic. Residues 850–871 (RSLKKTSTMAAPPQNENAEDAK) are disordered.

This sequence belongs to the G-protein coupled receptor 3 family. As to quaternary structure, homodimer. Interacts with GPR179. Interacts with photoreceptor synaptic protein LRIT1 (via its N-terminal extracellular domain). As to expression, restricted expression in the inner nuclear layer of the retina.

The protein localises to the cell membrane. It localises to the endoplasmic reticulum membrane. Its subcellular location is the golgi apparatus membrane. The protein resides in the cell projection. It is found in the dendrite. G-protein coupled receptor for glutamate. Ligand binding causes a conformation change that triggers signaling via guanine nucleotide-binding proteins (G proteins) and modulates the activity of down-stream effectors, such as adenylate cyclase. Signaling inhibits adenylate cyclase activity. Signaling stimulates TRPM1 channel activity and Ca(2+) uptake. Required for normal vision. In Rattus norvegicus (Rat), this protein is Metabotropic glutamate receptor 6 (Grm6).